We begin with the raw amino-acid sequence, 102 residues long: Signal recognition particle 19 kDa protein (102 aa).

This sequence belongs to the SRP19 family. In terms of assembly, part of the signal recognition particle protein translocation system, which is composed of SRP and FtsY. Archaeal SRP consists of a 7S RNA molecule of 300 nucleotides and two protein subunits: SRP54 and SRP19.

It localises to the cytoplasm. Functionally, involved in targeting and insertion of nascent membrane proteins into the cytoplasmic membrane. Binds directly to 7S RNA and mediates binding of the 54 kDa subunit of the SRP. The protein is Signal recognition particle 19 kDa protein of Saccharolobus solfataricus (strain ATCC 35092 / DSM 1617 / JCM 11322 / P2) (Sulfolobus solfataricus).